We begin with the raw amino-acid sequence, 92 residues long: Small ribosomal subunit protein uS19 (92 aa).

The protein belongs to the universal ribosomal protein uS19 family.

Its function is as follows. Protein S19 forms a complex with S13 that binds strongly to the 16S ribosomal RNA. In Photorhabdus laumondii subsp. laumondii (strain DSM 15139 / CIP 105565 / TT01) (Photorhabdus luminescens subsp. laumondii), this protein is Small ribosomal subunit protein uS19.